A 402-amino-acid chain; its full sequence is Elongation factor Tu (402 aa).

Residues 16–211 (KEHINIGTIG…AVDSYIDSPV (196 aa)) enclose the tr-type G domain. The G1 stretch occupies residues 25–32 (GHVDHGKT). GTP is bound at residue 25–32 (GHVDHGKT). Threonine 32 contacts Mg(2+). The interval 66-70 (GITIN) is G2. Positions 87 to 90 (DCPG) are G3. Residues 87–91 (DCPGH) and 142–145 (NKID) contribute to the GTP site. Positions 142–145 (NKID) are G4. The tract at residues 181–183 (SAR) is G5.

Belongs to the TRAFAC class translation factor GTPase superfamily. Classic translation factor GTPase family. EF-Tu/EF-1A subfamily. Monomer.

The protein resides in the cytoplasm. It catalyses the reaction GTP + H2O = GDP + phosphate + H(+). Its function is as follows. GTP hydrolase that promotes the GTP-dependent binding of aminoacyl-tRNA to the A-site of ribosomes during protein biosynthesis. The polypeptide is Elongation factor Tu (Mesomycoplasma hyopneumoniae (strain J / ATCC 25934 / NCTC 10110) (Mycoplasma hyopneumoniae)).